Here is a 422-residue protein sequence, read N- to C-terminus: Fasciclin-like arabinogalactan protein 10 (422 aa).

An N-terminal signal peptide occupies residues 1-25; sequence MATSRAFTLFAFTLSLLTVASTVSG. FAS1 domains are found at residues 26-172 and 187-327; these read HNIT…NAPI and GVSN…DNVL. Asn27, Asn128, Asn162, Asn190, and Asn244 each carry an N-linked (GlcNAc...) asparagine glycan. A disordered region spans residues 336–397; the sequence is SSSPAPAPEP…PTSSENSNAK (62 aa). Pro residues predominate over residues 340–374; it reads APAPEPVSAPTPTPAKSPSPVEAPSPTAASPPAPP. Over residues 386–397 the composition is skewed to polar residues; the sequence is DSPTSSENSNAK. Residue Asn398 is the site of GPI-anchor amidated asparagine attachment. Positions 399-422 are cleaved as a propeptide — removed in mature form; it reads AAFHVNAPALFTALVTIAATSLLL.

It belongs to the fasciclin-like AGP family.

It localises to the cell membrane. In terms of biological role, may be a cell surface adhesion protein. The polypeptide is Fasciclin-like arabinogalactan protein 10 (FLA10) (Arabidopsis thaliana (Mouse-ear cress)).